A 198-amino-acid chain; its full sequence is Elongation factor Ts (198 aa).

The tract at residues 81 to 84 is involved in Mg(2+) ion dislocation from EF-Tu; that stretch reads TDFV.

The protein belongs to the EF-Ts family.

It localises to the cytoplasm. Associates with the EF-Tu.GDP complex and induces the exchange of GDP to GTP. It remains bound to the aminoacyl-tRNA.EF-Tu.GTP complex up to the GTP hydrolysis stage on the ribosome. The polypeptide is Elongation factor Ts (Herpetosiphon aurantiacus (strain ATCC 23779 / DSM 785 / 114-95)).